Reading from the N-terminus, the 277-residue chain is Pantothenate synthetase (277 aa).

26–33 (MGNLHEGH) is an ATP binding site. Histidine 33 functions as the Proton donor in the catalytic mechanism. Residue glutamine 57 coordinates (R)-pantoate. Glutamine 57 provides a ligand contact to beta-alanine. 144 to 147 (GKKD) contributes to the ATP binding site. (R)-pantoate is bound at residue glutamine 150. Residues glycine 173 and 181–184 (LSSR) each bind ATP.

The protein belongs to the pantothenate synthetase family. Homodimer.

It localises to the cytoplasm. The catalysed reaction is (R)-pantoate + beta-alanine + ATP = (R)-pantothenate + AMP + diphosphate + H(+). Its pathway is cofactor biosynthesis; (R)-pantothenate biosynthesis; (R)-pantothenate from (R)-pantoate and beta-alanine: step 1/1. Catalyzes the condensation of pantoate with beta-alanine in an ATP-dependent reaction via a pantoyl-adenylate intermediate. The protein is Pantothenate synthetase of Laribacter hongkongensis (strain HLHK9).